The following is a 151-amino-acid chain: MDSAACAAAATPVPALALALAPDLAQAPLALPGLLSPSCLLSSGQEVNGSERGTCLWRPWLSSTNDSPRQMRKLVDLAAGGATAAEVTKAESKFHHPVRLFWPKSRSFDYLYSAGEILLQNFPVQATINLYEDSDSEEEEEDEEQEDEEEK.

The WRPW motif signature appears at 57-60; that stretch reads WRPW. Residues 96 to 131 are ripply homology domain; it reads HPVRLFWPKSRSFDYLYSAGEILLQNFPVQATINLY. The disordered stretch occupies residues 130 to 151; that stretch reads LYEDSDSEEEEEDEEQEDEEEK. The span at 132–151 shows a compositional bias: acidic residues; the sequence is EDSDSEEEEEDEEQEDEEEK.

It belongs to the ripply family.

It is found in the nucleus. Functionally, plays a role in somitogenesis. Essential for transcriptional repression of the segmental patterning genes, thus terminating the segmentation program in the presomitic mesoderm, and also required for the maintenance of rostrocaudal polarity in somites. In Homo sapiens (Human), this protein is Protein ripply1.